The chain runs to 471 residues: UDP-N-acetylmuramoylalanine--D-glutamate ligase (471 aa).

Residue 122–128 (GTNGKTT) coordinates ATP.

It belongs to the MurCDEF family.

The protein resides in the cytoplasm. It carries out the reaction UDP-N-acetyl-alpha-D-muramoyl-L-alanine + D-glutamate + ATP = UDP-N-acetyl-alpha-D-muramoyl-L-alanyl-D-glutamate + ADP + phosphate + H(+). It functions in the pathway cell wall biogenesis; peptidoglycan biosynthesis. In terms of biological role, cell wall formation. Catalyzes the addition of glutamate to the nucleotide precursor UDP-N-acetylmuramoyl-L-alanine (UMA). This is UDP-N-acetylmuramoylalanine--D-glutamate ligase from Streptomyces coelicolor (strain ATCC BAA-471 / A3(2) / M145).